A 444-amino-acid polypeptide reads, in one-letter code: UDP-N-acetylmuramate--L-alanine ligase (444 aa).

Residue 110-116 (GAHGKTS) coordinates ATP.

Belongs to the MurCDEF family.

It localises to the cytoplasm. It carries out the reaction UDP-N-acetyl-alpha-D-muramate + L-alanine + ATP = UDP-N-acetyl-alpha-D-muramoyl-L-alanine + ADP + phosphate + H(+). Its pathway is cell wall biogenesis; peptidoglycan biosynthesis. In terms of biological role, cell wall formation. This is UDP-N-acetylmuramate--L-alanine ligase from Streptococcus pneumoniae (strain Hungary19A-6).